A 488-amino-acid chain; its full sequence is Protein nucleotidyltransferase YdiU (488 aa).

ATP contacts are provided by Gly-91, Gly-93, Arg-94, Lys-114, Asp-126, Gly-127, Arg-177, and Arg-184. The Proton acceptor role is filled by Asp-253. The Mg(2+) site is built by Asn-254 and Asp-263. Residue Asp-263 participates in ATP binding.

This sequence belongs to the SELO family. The cofactor is Mg(2+). Mn(2+) serves as cofactor.

The enzyme catalyses L-seryl-[protein] + ATP = 3-O-(5'-adenylyl)-L-seryl-[protein] + diphosphate. It catalyses the reaction L-threonyl-[protein] + ATP = 3-O-(5'-adenylyl)-L-threonyl-[protein] + diphosphate. The catalysed reaction is L-tyrosyl-[protein] + ATP = O-(5'-adenylyl)-L-tyrosyl-[protein] + diphosphate. It carries out the reaction L-histidyl-[protein] + UTP = N(tele)-(5'-uridylyl)-L-histidyl-[protein] + diphosphate. The enzyme catalyses L-seryl-[protein] + UTP = O-(5'-uridylyl)-L-seryl-[protein] + diphosphate. It catalyses the reaction L-tyrosyl-[protein] + UTP = O-(5'-uridylyl)-L-tyrosyl-[protein] + diphosphate. Nucleotidyltransferase involved in the post-translational modification of proteins. It can catalyze the addition of adenosine monophosphate (AMP) or uridine monophosphate (UMP) to a protein, resulting in modifications known as AMPylation and UMPylation. The chain is Protein nucleotidyltransferase YdiU from Bacillus cereus (strain ZK / E33L).